We begin with the raw amino-acid sequence, 100 residues long: Urease subunit gamma (100 aa).

It belongs to the urease gamma subunit family. Heterotrimer of UreA (gamma), UreB (beta) and UreC (alpha) subunits. Three heterotrimers associate to form the active enzyme.

Its subcellular location is the cytoplasm. The enzyme catalyses urea + 2 H2O + H(+) = hydrogencarbonate + 2 NH4(+). It participates in nitrogen metabolism; urea degradation; CO(2) and NH(3) from urea (urease route): step 1/1. The sequence is that of Urease subunit gamma from Burkholderia multivorans (strain ATCC 17616 / 249).